A 1405-amino-acid chain; its full sequence is DNA-directed RNA polymerase subunit beta' (1405 aa).

Residues C70, C72, C85, and C88 each coordinate Zn(2+). 3 residues coordinate Mg(2+): D460, D462, and D464. Residues C814, C888, C895, and C898 each coordinate Zn(2+).

It belongs to the RNA polymerase beta' chain family. In terms of assembly, the RNAP catalytic core consists of 2 alpha, 1 beta, 1 beta' and 1 omega subunit. When a sigma factor is associated with the core the holoenzyme is formed, which can initiate transcription. The cofactor is Mg(2+). It depends on Zn(2+) as a cofactor.

It carries out the reaction RNA(n) + a ribonucleoside 5'-triphosphate = RNA(n+1) + diphosphate. DNA-dependent RNA polymerase catalyzes the transcription of DNA into RNA using the four ribonucleoside triphosphates as substrates. This chain is DNA-directed RNA polymerase subunit beta', found in Shewanella putrefaciens (strain CN-32 / ATCC BAA-453).